The sequence spans 1265 residues: MTIDKLKKSIKFNIDRGGTFTDIYAEFPYEPYYIVEKLLSVDPENYSDAPREGIRRILERIQGKSISKENVDTYAIKSIRMGTTVGTNALLERKGEKVLLVTSKGFRDLLQIGNQSRPKIFELNITKPELIYNSVVELDERVQIVTNDQVLNDIKLESPNSLKKGTTGDYIKVLEIPNRDKIKSELLKYFVKGIKSIAVVFIHSYTFHDHELLVGEIAKEIGFEHISLSHQLMPMIKAVPRGLTSCVDAYLTPLIELYIKNFTKGFDSNIGDVDISFMMSDGGLCPVDSFRGFRSILSGPAGGVVGYSKTTSTVIESHKNNNGNNEIKQQPIIGFDMGGTSTDVSRYNGTLDHVFETEISGLTIQAPQLDIHTVAAGGGSRLFFKSGLFLVGPESVGAHPGPVCYKKNGQLAITDANLLLGRLLPEYFPPIFGPNQNEPLDLEATKKAFKELTDEINQFQQNNNLPLMTEDQVAFGFIRVANEAMCRPIRNITEAKGFDCSQHVLACFGGAGGQHSCSIAQNLGMPKVFIHRFSGILSAYGLGLADLVIDTQEPCSLIYNKENKSTFEKQLNQLKENAKQQLLNKGFPEEEIFCEGFLNLRFSGTDTAMMIKTPDNHDYEAEFKSNYKREFGFLILGRDLLIDDIRVRVHARGSDLNSLRINDSTGEPLKPETIQKCYFESVGRIDTPIYLLKSLCGGDSIDGPAIIIDNTTTIVVEPNCKANILKPSGNIEILIGGGKSKTVTTELDPIMLSVFSHRFMSIAEQMGKIIIRTSISTNIKERLDFSCALFSPDGGLVANAPAIPIHVGSMQNAVKYQVETLGSNWKEGEVVLSNHPQAGGSHLPDLTVMTPVYHKGEIVFFVASRGHHADIGGITPGSMPPFSKSISEEGAAIMSLKIVKDGHFQEEAVRKTFEKSRNLSDNISDLKAQIAANHKGIQLMQELINHYGLDVVHAYMYHIQKNAELAVRDMLYDISISNNLKPLDTLISTDYMDDGSKIELKLTIDREKKSAIFDWSGSGVEVYGNTNAPTSITLSATIYSLRAMVKSEIPLNQGCLAPILTVIPPGSILNPSFDSAVVGGNVLTSQRLTDVILSAFGACANSQGCMNNLTFGDETLGYYETIAGGTGAGPNFNGFTAVQSHMTNTRITDVEIMEKRYPVIVKEFSVRYGSGGDGKFKGGDGVVREIQFLKNFTVSILSERRSLQPRGLMGGENAERGLNLVLKNNGKYINIGSKNSINIERNESIIIFTPGGGGFGQKDSMITDN.

Belongs to the oxoprolinase family. As to quaternary structure, homodimer.

It is found in the cytoplasm. It localises to the cytosol. It catalyses the reaction 5-oxo-L-proline + ATP + 2 H2O = L-glutamate + ADP + phosphate + H(+). In terms of biological role, catalyzes the cleavage of 5-oxo-L-proline to form L-glutamate coupled to the hydrolysis of ATP to ADP and inorganic phosphate. The protein is 5-oxoprolinase (oplah) of Dictyostelium discoideum (Social amoeba).